The sequence spans 813 residues: Striatin-interacting protein 1 homolog (813 aa).

Disordered stretches follow at residues 1-41 (MDGV…SEAP) and 307-379 (RAAS…RDEV). Residues 9–18 (NNKQKQNQML) show a composition bias toward polar residues. Residues 22–35 (MRGEFTRNQRKDSE) are compositionally biased toward basic and acidic residues. Residues 307–316 (RAASPPASAS) are compositionally biased toward low complexity. At Ser310 the chain carries Phosphoserine. Residues 331–352 (KALIKQDNLDTFNEKDPYKADD) are compositionally biased toward basic and acidic residues. Positions 353-367 (SHEDEEENDDNDNSL) are enriched in acidic residues.

It belongs to the STRIP family. Part of the core of STRIPAK complexes composed of PP2A catalytic and scaffolding subunits, the striatins (PP2A regulatory subunits), the striatin-associated proteins MOB4, STRIP1 and STRIP2, PDCD10 and members of the STE20 kinases, such as STK24 and STK26.

The protein localises to the cytoplasm. Functionally, plays a role in the regulation of cell morphology and cytoskeletal organization. Required in the cortical actin filament dynamics and cell shape. Part of the striatin-interacting phosphatase and kinase (STRIPAK) complexes. STRIPAK complexes have critical roles in protein (de)phosphorylation and are regulators of multiple signaling pathways including Hippo, MAPK, nuclear receptor and cytoskeleton remodeling. Different types of STRIPAK complexes are involved in a variety of biological processes such as cell growth, differentiation, apoptosis, metabolism and immune regulation. This Danio rerio (Zebrafish) protein is Striatin-interacting protein 1 homolog (strip1).